A 152-amino-acid polypeptide reads, in one-letter code: Ribosome maturation factor RimP (152 aa).

The protein belongs to the RimP family.

Its subcellular location is the cytoplasm. Functionally, required for maturation of 30S ribosomal subunits. This is Ribosome maturation factor RimP from Pseudomonas putida (strain GB-1).